Here is a 179-residue protein sequence, read N- to C-terminus: Large ribosomal subunit protein uL5 (179 aa).

Belongs to the universal ribosomal protein uL5 family. In terms of assembly, part of the 50S ribosomal subunit; part of the 5S rRNA/L5/L18/L25 subcomplex. Contacts the 5S rRNA and the P site tRNA. Forms a bridge to the 30S subunit in the 70S ribosome.

Its function is as follows. This is one of the proteins that bind and probably mediate the attachment of the 5S RNA into the large ribosomal subunit, where it forms part of the central protuberance. In the 70S ribosome it contacts protein S13 of the 30S subunit (bridge B1b), connecting the 2 subunits; this bridge is implicated in subunit movement. Contacts the P site tRNA; the 5S rRNA and some of its associated proteins might help stabilize positioning of ribosome-bound tRNAs. The chain is Large ribosomal subunit protein uL5 from Pseudomonas paraeruginosa (strain DSM 24068 / PA7) (Pseudomonas aeruginosa (strain PA7)).